The following is a 189-amino-acid chain: Elongation factor P (189 aa).

Belongs to the elongation factor P family.

It is found in the cytoplasm. The protein operates within protein biosynthesis; polypeptide chain elongation. Functionally, involved in peptide bond synthesis. Stimulates efficient translation and peptide-bond synthesis on native or reconstituted 70S ribosomes in vitro. Probably functions indirectly by altering the affinity of the ribosome for aminoacyl-tRNA, thus increasing their reactivity as acceptors for peptidyl transferase. This is Elongation factor P from Pseudomonas entomophila (strain L48).